Reading from the N-terminus, the 84-residue chain is Dolichol phosphate-mannose biosynthesis regulatory protein (84 aa).

2 consecutive transmembrane segments (helical) span residues Leu-11–Leu-31 and Tyr-49–Ile-69.

Belongs to the DPM2 family. Component of the dolichol-phosphate mannose (DPM) synthase complex composed of DPM1, DPM2 and DPM3; in the complex interacts directly with DPM3. Component of the glycosylphosphatidylinositol-N-acetylglucosaminyltransferase (GPI-GnT) complex composed at least by PIGA, PIGC, PIGH, PIGP, PIGQ, PIGY and DPM2. Interacts with PIGA, PIGC and PIGQ.

It localises to the endoplasmic reticulum membrane. It participates in protein modification; protein glycosylation. Functionally, regulates the biosynthesis of dolichol phosphate-mannose. Regulatory subunit of the dolichol-phosphate mannose (DPM) synthase complex; essential for the ER localization and stable expression of DPM1. Part of the glycosylphosphatidylinositol-N-acetylglucosaminyltransferase (GPI-GnT) complex that catalyzes the transfer of N-acetylglucosamine from UDP-N-acetylglucosamine to phosphatidylinositol and participates in the first step of GPI biosynthesis. May act by regulating the GPI-GNT complex. This Homo sapiens (Human) protein is Dolichol phosphate-mannose biosynthesis regulatory protein.